The sequence spans 162 residues: Cytochrome c-type biogenesis protein CcmE (162 aa).

Residues 1–7 are Cytoplasmic-facing; it reads MTRKQRR. A helical; Signal-anchor for type II membrane protein membrane pass occupies residues 8–28; sequence LTMIGGALVVLGIAAALVLNA. Over 29 to 162 the chain is Periplasmic; it reads LRDSIVFFST…EASSKQEVSQ (134 aa). H122 and Y126 together coordinate heme. The interval 140-162 is disordered; it reads HWKDDYGAQPGAAEASSKQEVSQ.

The protein belongs to the CcmE/CycJ family.

It is found in the cell inner membrane. Its function is as follows. Heme chaperone required for the biogenesis of c-type cytochromes. Transiently binds heme delivered by CcmC and transfers the heme to apo-cytochromes in a process facilitated by CcmF and CcmH. The chain is Cytochrome c-type biogenesis protein CcmE from Nitrobacter winogradskyi (strain ATCC 25391 / DSM 10237 / CIP 104748 / NCIMB 11846 / Nb-255).